The primary structure comprises 585 residues: Serine protease HtrA-like (585 aa).

The tract at residues Met1 to Thr184 is disordered. Positions Tyr21 to Tyr82 are enriched in basic and acidic residues. The segment covering Gln84–Asn94 has biased composition (polar residues). The segment covering Lys95–Val113 has biased composition (basic and acidic residues). Polar residues predominate over residues Ser114 to Asn124. The segment covering Ser126–Gln139 has biased composition (basic and acidic residues). The span at Gly151–Gln175 shows a compositional bias: polar residues. Residues Met224 to Val244 form a helical membrane-spanning segment. Residues His320, Asp350, and Ser435 each act as charge relay system in the active site. The 60-residue stretch at Gly516–Gly575 folds into the PDZ domain.

This sequence belongs to the peptidase S1C family.

The protein resides in the cell membrane. The chain is Serine protease HtrA-like from Staphylococcus epidermidis (strain ATCC 35984 / DSM 28319 / BCRC 17069 / CCUG 31568 / BM 3577 / RP62A).